The chain runs to 555 residues: 5'-nucleotidase-related protein (555 aa).

The first 25 residues, 1–25, serve as a signal peptide directing secretion; sequence MKSLIGTLGLYCLFILTNNVVSSYG. Residues Asp-38, His-40, and Asp-91 each coordinate a divalent metal cation. Asn-105 carries N-linked (GlcNAc...) asparagine glycosylation. Asn-123 serves as a coordination point for a divalent metal cation. The N-linked (GlcNAc...) asparagine glycan is linked to Asn-198. 2 residues coordinate a divalent metal cation: His-225 and His-249. Asn-295 carries an N-linked (GlcNAc...) asparagine glycan. Arg-358, Arg-402, and Phe-421 together coordinate AMP. An N-linked (GlcNAc...) asparagine glycan is attached at Asn-465. The AMP site is built by Phe-505 and Asp-511.

The protein belongs to the 5'-nucleotidase family. Mg(2+) serves as cofactor. The cofactor is Mn(2+). As to expression, salivary gland (at protein level). Saliva (at protein level).

The protein localises to the secreted. It catalyses the reaction a ribonucleoside 5'-triphosphate + 2 H2O = a ribonucleoside 5'-phosphate + 2 phosphate + 2 H(+). DEPC (2 mM), sodium fluoride (10 mM) and 4,4'-Diisothiocyano-2,2'-stilbenedisulfonic acid (DIDS, 100 uM) nearly completely abrogate activity. Concanavalin A enhances activity. Functionally, facilitates hematophagy by inhibiting ADP-dependent platelet aggregation and promoting disaggregation of ADP-stimulated platelets in the host. Cleaves adenosine triphosphate (ATP) and adenosine diphosphate (ADP) to adenosine monophosphate (AMP) and inorganic phosphate. Interacts with fibrinogen receptor integrin alpha-IIb/beta-3 (ITGA2B/ITGB3). This Glossina morsitans morsitans (Savannah tsetse fly) protein is 5'-nucleotidase-related protein.